Consider the following 141-residue polypeptide: U1 small nuclear ribonucleoprotein C (141 aa).

The segment at 4–36 adopts a Matrin-type zinc-finger fold; sequence YYCEYCDKYLTHDSPSVRKSHTIGKVHQQAVTL. The tract at residues 69-141 is disordered; the sequence is LLPPNMVPGQ…SNSPPSNNDQ (73 aa). The span at 83 to 97 shows a compositional bias: pro residues; that stretch reads MMPPGQFPFPPPPGQ. Low complexity-rich tracts occupy residues 100–110 and 124–141; these read GGMPPHQQQPM and QQSAQQFNSNSPPSNNDQ.

The protein belongs to the U1 small nuclear ribonucleoprotein C family. In terms of assembly, component of the U1 snRNP. The U1 snRNP is composed of the U1 snRNA and the 7 core Sm proteins SNRPB, SNRPD1, SNRPD2, SNRPD3, SNRPE, SNRPF and SNRPG that assemble in a heptameric protein ring on the Sm site of the small nuclear RNA to form the core snRNP, and at least 3 U1 snRNP-specific proteins SNRNP70/U1-70K, SNRPA/U1-A and SNRPC/U1-C. SNRPC/U1-C interacts with U1 snRNA and the 5' splice-site region of the pre-mRNA.

It localises to the nucleus. Functionally, component of the spliceosomal U1 snRNP, which is essential for recognition of the pre-mRNA 5' splice-site and the subsequent assembly of the spliceosome. SNRPC/U1-C is directly involved in initial 5' splice-site recognition for both constitutive and regulated alternative splicing. The interaction with the 5' splice-site seems to precede base-pairing between the pre-mRNA and the U1 snRNA. Stimulates commitment or early (E) complex formation by stabilizing the base pairing of the 5' end of the U1 snRNA and the 5' splice-site region. In Heterostelium pallidum (strain ATCC 26659 / Pp 5 / PN500) (Cellular slime mold), this protein is U1 small nuclear ribonucleoprotein C.